Reading from the N-terminus, the 428-residue chain is Histone-lysine N-methyltransferase SMYD3 (428 aa).

Met-1 is modified (N-acetylmethionine). An SET domain is found at Leu-4–Leu-240. Residue Arg-14 to Asn-16 coordinates S-adenosyl-L-methionine. Thr-22 carries the phosphothreonine modification. Cys-49, Cys-52, Cys-62, Cys-65, Cys-71, Cys-75, His-83, and Cys-87 together coordinate Zn(2+). The MYND-type zinc finger occupies Cys-49–Cys-87. S-adenosyl-L-methionine contacts are provided by residues Tyr-124, Asn-132, Asn-181, Asn-205–His-206, Tyr-239, and Phe-259. Positions Asp-272–Ser-428 are C-terminal domain; essential for histone methyltransferase activity, nuclear localization and mediates interaction with HSP90AA1.

Belongs to the class V-like SAM-binding methyltransferase superfamily. Histone-lysine methyltransferase family. In terms of assembly, interacts with HSPCA. Interacts with HELZ. Interacts with POLR2A; the interaction may be indirect and may be mediated by HELZ. Interacts with HSP90AA1; this interaction enhances SMYD3 histone-lysine N-methyltransferase. As to expression, expressed in skeletal muscles and testis. Overexpressed in a majority of colorectal and hepatocellular carcinomas.

It localises to the cytoplasm. It is found in the nucleus. The catalysed reaction is L-lysyl(4)-[histone H3] + 3 S-adenosyl-L-methionine = N(6),N(6),N(6)-trimethyl-L-lysyl(4)-[histone H3] + 3 S-adenosyl-L-homocysteine + 3 H(+). Histone methyltransferase activity strongly stimulated by HSPCA. Functionally, histone methyltransferase. Specifically methylates 'Lys-4' of histone H3, inducing di- and tri-methylation, but not monomethylation. Also methylates 'Lys-5' of histone H4. Plays an important role in transcriptional activation as a member of an RNA polymerase complex. Binds DNA containing 5'-CCCTCC-3' or 5'-GAGGGG-3' sequences. In Homo sapiens (Human), this protein is Histone-lysine N-methyltransferase SMYD3 (SMYD3).